An 89-amino-acid polypeptide reads, in one-letter code: Large ribosomal subunit protein bL31B (89 aa).

It belongs to the bacterial ribosomal protein bL31 family. Type B subfamily. In terms of assembly, part of the 50S ribosomal subunit.

This chain is Large ribosomal subunit protein bL31B, found in Corynebacterium aurimucosum (strain ATCC 700975 / DSM 44827 / CIP 107346 / CN-1) (Corynebacterium nigricans).